The following is a 451-amino-acid chain: tRNA-2-methylthio-N(6)-dimethylallyladenosine synthase (451 aa).

Positions 11–127 (RHYHITTFGC…LEDLLQQVFD (117 aa)) constitute an MTTase N-terminal domain. Cys-20, Cys-56, Cys-90, Cys-162, Cys-166, and Cys-169 together coordinate [4Fe-4S] cluster. The Radical SAM core domain occupies 148-385 (RDSTITAWVN…NHLVAQKAAE (238 aa)). The TRAM domain occupies 388–451 (QRYLGRIEEV…RAFSLTGEIV (64 aa)).

Belongs to the methylthiotransferase family. MiaB subfamily. Monomer. It depends on [4Fe-4S] cluster as a cofactor.

It is found in the cytoplasm. The catalysed reaction is N(6)-dimethylallyladenosine(37) in tRNA + (sulfur carrier)-SH + AH2 + 2 S-adenosyl-L-methionine = 2-methylsulfanyl-N(6)-dimethylallyladenosine(37) in tRNA + (sulfur carrier)-H + 5'-deoxyadenosine + L-methionine + A + S-adenosyl-L-homocysteine + 2 H(+). In terms of biological role, catalyzes the methylthiolation of N6-(dimethylallyl)adenosine (i(6)A), leading to the formation of 2-methylthio-N6-(dimethylallyl)adenosine (ms(2)i(6)A) at position 37 in tRNAs that read codons beginning with uridine. This is tRNA-2-methylthio-N(6)-dimethylallyladenosine synthase from Rippkaea orientalis (strain PCC 8801 / RF-1) (Cyanothece sp. (strain PCC 8801)).